The following is an 812-amino-acid chain: Plasminogen (812 aa).

The signal sequence occupies residues 1-19 (MDHKEVILLFLLLLKPGQG). Positions 20–98 (DSLDGYISTQ…RDVILFEKRV (79 aa)) constitute a PAN domain. Cystine bridges form between Cys-49/Cys-73, Cys-53/Cys-61, Cys-103/Cys-181, Cys-124/Cys-164, Cys-152/Cys-176, Cys-185/Cys-262, Cys-188/Cys-316, Cys-206/Cys-245, Cys-234/Cys-257, Cys-275/Cys-352, Cys-296/Cys-335, Cys-324/Cys-347, Cys-377/Cys-454, Cys-398/Cys-437, Cys-426/Cys-449, Cys-481/Cys-560, Cys-502/Cys-543, Cys-531/Cys-555, Cys-568/Cys-687, Cys-578/Cys-586, and Cys-609/Cys-625. Kringle domains are found at residues 103-181 (CKTG…IPEC), 184-262 (ECMY…IPRC), 275-352 (CLKG…IPSC), 377-454 (CYQS…LKRC), and 481-560 (CMYG…IPLC). The 229-residue stretch at 582–810 (VVGGCVANPH…FVDWIEREMR (229 aa)) folds into the Peptidase S1 domain. Phosphoserine is present on Ser-598. Residues His-624 and Asp-667 each act as charge relay system in the active site. At Ser-690 the chain carries Phosphoserine. 3 disulfide bridges follow: Cys-701–Cys-768, Cys-731–Cys-747, and Cys-758–Cys-786. Residue Ser-762 is the Charge relay system of the active site.

It belongs to the peptidase S1 family. Plasminogen subfamily. In terms of assembly, interacts (both mature PLG and the angiostatin peptide) with AMOT and CSPG4. Interacts (via the Kringle domains) with HRG; the interaction tethers PLG to the cell surface and enhances its activation. Interacts (via Kringle 4 domain) with ADA; the interaction stimulates PLG activation when in complex with DPP4. Angiostatin: Interacts with ATP5F1A; the interaction inhibits most of the angiogenic effects of angiostatin. In the presence of the inhibitor, the activation involves only cleavage after Arg-581, yielding two chains held together by two disulfide bonds. In the absence of the inhibitor, the activation involves additionally the removal of the activation peptide.

It localises to the secreted. The catalysed reaction is Preferential cleavage: Lys-|-Xaa &gt; Arg-|-Xaa, higher selectivity than trypsin. Converts fibrin into soluble products.. With respect to regulation, converted into plasmin by plasminogen activators, both plasminogen and its activator being bound to fibrin. Cannot be activated with streptokinase. Its function is as follows. Plasmin dissolves the fibrin of blood clots and acts as a proteolytic factor in a variety of other processes including embryonic development, tissue remodeling, tumor invasion, and inflammation. In ovulation, weakens the walls of the Graafian follicle. It activates the urokinase-type plasminogen activator, collagenases and several complement zymogens, such as C1, C4 and C5. Cleavage of fibronectin and laminin leads to cell detachment and apoptosis. Also cleaves fibrin, thrombospondin and von Willebrand factor. Its role in tissue remodeling and tumor invasion may be modulated by CSPG4. Binds to cells. In terms of biological role, angiostatin is an angiogenesis inhibitor that blocks neovascularization and growth of experimental primary and metastatic tumors in vivo. The sequence is that of Plasminogen (Plg) from Mus musculus (Mouse).